Reading from the N-terminus, the 277-residue chain is Large ribosomal subunit protein uL2c (277 aa).

The tract at residues 30-60 is disordered; that stretch reads RKKLTSGQHSGKGRNNRGIITSRHRGGGHKR. The segment covering 51–60 has biased composition (basic residues); the sequence is SRHRGGGHKR.

This sequence belongs to the universal ribosomal protein uL2 family. As to quaternary structure, part of the 50S ribosomal subunit.

It is found in the plastid. The protein localises to the chloroplast. In Angiopteris evecta (Mule's foot fern), this protein is Large ribosomal subunit protein uL2c (rpl2).